A 144-amino-acid polypeptide reads, in one-letter code: Large ribosomal subunit protein uL15 (144 aa).

Residues 1 to 54 (MRLNTLSPAAGAKHAPKRVGRGMGSGLGKTAGRGHKGQKSRSGGGVRPGFEGGQ) form a disordered region. 2 stretches are compositionally biased toward gly residues: residues 21-31 (RGMGSGLGKTA) and 42-52 (SGGGVRPGFEG).

This sequence belongs to the universal ribosomal protein uL15 family. As to quaternary structure, part of the 50S ribosomal subunit.

Its function is as follows. Binds to the 23S rRNA. The sequence is that of Large ribosomal subunit protein uL15 from Shewanella oneidensis (strain ATCC 700550 / JCM 31522 / CIP 106686 / LMG 19005 / NCIMB 14063 / MR-1).